The following is a 266-amino-acid chain: 4-hydroxy-tetrahydrodipicolinate reductase (266 aa).

10 to 15 (GPRGRM) is an NAD(+) binding site. K38 contributes to the NADP(+) binding site. NAD(+) is bound by residues 99–101 (GTT) and 125–128 (APNF). Catalysis depends on H155, which acts as the Proton donor/acceptor. H156 lines the (S)-2,3,4,5-tetrahydrodipicolinate pocket. The Proton donor role is filled by K159. 165-166 (GT) is a (S)-2,3,4,5-tetrahydrodipicolinate binding site.

It belongs to the DapB family.

It localises to the cytoplasm. It carries out the reaction (S)-2,3,4,5-tetrahydrodipicolinate + NAD(+) + H2O = (2S,4S)-4-hydroxy-2,3,4,5-tetrahydrodipicolinate + NADH + H(+). The enzyme catalyses (S)-2,3,4,5-tetrahydrodipicolinate + NADP(+) + H2O = (2S,4S)-4-hydroxy-2,3,4,5-tetrahydrodipicolinate + NADPH + H(+). It participates in amino-acid biosynthesis; L-lysine biosynthesis via DAP pathway; (S)-tetrahydrodipicolinate from L-aspartate: step 4/4. Functionally, catalyzes the conversion of 4-hydroxy-tetrahydrodipicolinate (HTPA) to tetrahydrodipicolinate. This chain is 4-hydroxy-tetrahydrodipicolinate reductase, found in Bacillus anthracis (strain A0248).